We begin with the raw amino-acid sequence, 454 residues long: Lipase member H (454 aa).

The N-terminal stretch at 1-23 (MIYRKIIWGILYVTLMLFDTHRA) is a signal peptide. 3 N-linked (GlcNAc...) asparagine glycosylation sites follow: Asn-73, Asn-137, and Asn-151. Residue Ser-161 is the Nucleophile of the active site. Asp-185 serves as the catalytic Charge relay system. Residues Cys-240 and Cys-253 are joined by a disulfide bond. The active-site Charge relay system is His-255. Residue Asn-267 is glycosylated (N-linked (GlcNAc...) asparagine). Intrachain disulfides connect Cys-277–Cys-288 and Cys-291–Cys-299. Asn-358 is a glycosylation site (N-linked (GlcNAc...) asparagine). An intrachain disulfide couples Cys-430 to Cys-449.

The protein belongs to the AB hydrolase superfamily. Lipase family.

The protein resides in the secreted. Its subcellular location is the cell membrane. It catalyses the reaction 1-hexadecanoyl-2-(9Z-octadecenoyl)-sn-glycero-3-phosphate + H2O = 2-(9Z-octadecenoyl)-sn-glycero-3-phosphate + hexadecanoate + H(+). Its function is as follows. Hydrolyzes specifically phosphatidic acid (PA) to produce 2-acyl lysophosphatidic acid (LPA; a potent bioactive lipid mediator) and fatty acid. Does not hydrolyze other phospholipids, like phosphatidylserine (PS), phosphatidylcholine (PC) and phosphatidylethanolamine (PE) or triacylglycerol (TG). In Danio rerio (Zebrafish), this protein is Lipase member H (liph).